We begin with the raw amino-acid sequence, 484 residues long: Cobyric acid synthase (484 aa).

Positions 248-435 (VLKVIVPVLP…LHGLFEGSQS (188 aa)) constitute a GATase cobBQ-type domain. The Nucleophile role is filled by cysteine 329. Histidine 427 is a catalytic residue.

This sequence belongs to the CobB/CobQ family. CobQ subfamily.

The protein operates within cofactor biosynthesis; adenosylcobalamin biosynthesis. Functionally, catalyzes amidations at positions B, D, E, and G on adenosylcobyrinic A,C-diamide. NH(2) groups are provided by glutamine, and one molecule of ATP is hydrogenolyzed for each amidation. In Pseudomonas putida (strain GB-1), this protein is Cobyric acid synthase.